The following is a 99-amino-acid chain: Large ribosomal subunit protein uL23 (99 aa).

This sequence belongs to the universal ribosomal protein uL23 family. Part of the 50S ribosomal subunit. Contacts protein L29, and trigger factor when it is bound to the ribosome.

One of the early assembly proteins it binds 23S rRNA. One of the proteins that surrounds the polypeptide exit tunnel on the outside of the ribosome. Forms the main docking site for trigger factor binding to the ribosome. The protein is Large ribosomal subunit protein uL23 of Rhodopseudomonas palustris (strain BisB5).